Consider the following 151-residue polypeptide: Large ribosomal subunit protein uL13 (151 aa).

The disordered stretch occupies residues 126 to 151 (YPGSNHPHEAQKPEKLTIQTIPGGER). Over residues 131 to 140 (HPHEAQKPEK) the composition is skewed to basic and acidic residues.

The protein belongs to the universal ribosomal protein uL13 family. As to quaternary structure, part of the 50S ribosomal subunit.

Its function is as follows. This protein is one of the early assembly proteins of the 50S ribosomal subunit, although it is not seen to bind rRNA by itself. It is important during the early stages of 50S assembly. This Trichodesmium erythraeum (strain IMS101) protein is Large ribosomal subunit protein uL13.